Reading from the N-terminus, the 392-residue chain is NADH-quinone oxidoreductase subunit D (392 aa).

The protein belongs to the complex I 49 kDa subunit family. As to quaternary structure, NDH-1 is composed of 14 different subunits. Subunits NuoB, C, D, E, F, and G constitute the peripheral sector of the complex.

It localises to the cell inner membrane. It carries out the reaction a quinone + NADH + 5 H(+)(in) = a quinol + NAD(+) + 4 H(+)(out). NDH-1 shuttles electrons from NADH, via FMN and iron-sulfur (Fe-S) centers, to quinones in the respiratory chain. The immediate electron acceptor for the enzyme in this species is believed to be ubiquinone. Couples the redox reaction to proton translocation (for every two electrons transferred, four hydrogen ions are translocated across the cytoplasmic membrane), and thus conserves the redox energy in a proton gradient. This Rhodospirillum rubrum (strain ATCC 11170 / ATH 1.1.1 / DSM 467 / LMG 4362 / NCIMB 8255 / S1) protein is NADH-quinone oxidoreductase subunit D.